We begin with the raw amino-acid sequence, 230 residues long: RNA-binding riboflavin kinase RibR (230 aa).

It belongs to the RibR family.

The catalysed reaction is riboflavin + ATP = FMN + ADP + H(+). Its function is as follows. May be directly involved in the regulation of the rib genes. C-terminal part of RibR specifically binds to RFN of the rib leader of the riboflavin biosynthetic operon. The RFN element is a sequence within the rib-leader mRNA reported to serve as a receptor for an FMN-dependent riboswitch. Possibly, RibR produces the comodulator FMN through its own N-terminal flavokinase activity. FMN-activated RibR may stabilize the anti-anti terminator structure of RFN mRNA, causing transcription termination of the rib genes in trans. The polypeptide is RNA-binding riboflavin kinase RibR (ribR) (Bacillus subtilis (strain 168)).